The sequence spans 678 residues: UvrABC system protein B (678 aa).

A Helicase ATP-binding domain is found at 35-422 (EGVSDGLMFQ…ADNVVEQVVR (388 aa)). Position 48–55 (48–55 (GVTGSGKT)) interacts with ATP. The Beta-hairpin motif lies at 101 to 124 (YYDYYQPEAYVPTRDLFIEKDSSI). Residues 439-605 (QVDDLLGEIH…GVSKAVRELI (167 aa)) enclose the Helicase C-terminal domain. Residues 633–668 (AREIRRLEKLMMDHARNLEFEQAAAARDALNALKSR) form the UVR domain.

The protein belongs to the UvrB family. In terms of assembly, forms a heterotetramer with UvrA during the search for lesions. Interacts with UvrC in an incision complex.

It is found in the cytoplasm. In terms of biological role, the UvrABC repair system catalyzes the recognition and processing of DNA lesions. A damage recognition complex composed of 2 UvrA and 2 UvrB subunits scans DNA for abnormalities. Upon binding of the UvrA(2)B(2) complex to a putative damaged site, the DNA wraps around one UvrB monomer. DNA wrap is dependent on ATP binding by UvrB and probably causes local melting of the DNA helix, facilitating insertion of UvrB beta-hairpin between the DNA strands. Then UvrB probes one DNA strand for the presence of a lesion. If a lesion is found the UvrA subunits dissociate and the UvrB-DNA preincision complex is formed. This complex is subsequently bound by UvrC and the second UvrB is released. If no lesion is found, the DNA wraps around the other UvrB subunit that will check the other stand for damage. In Bordetella pertussis (strain Tohama I / ATCC BAA-589 / NCTC 13251), this protein is UvrABC system protein B.